The primary structure comprises 378 residues: tRNA (guanine(37)-N(1))-methyltransferase (378 aa).

Residues His-196, 234–235 (DL), 262–263 (DA), and Asn-282 contribute to the S-adenosyl-L-methionine site.

Belongs to the class I-like SAM-binding methyltransferase superfamily. TRM5/TYW2 family. As to quaternary structure, monomer.

It is found in the mitochondrion matrix. The protein localises to the nucleus. The protein resides in the cytoplasm. It carries out the reaction guanosine(37) in tRNA + S-adenosyl-L-methionine = N(1)-methylguanosine(37) in tRNA + S-adenosyl-L-homocysteine + H(+). Its function is as follows. Specifically methylates the N1 position of guanosine-37 in various cytoplasmic and mitochondrial tRNAs. Methylation is not dependent on the nature of the nucleoside 5' of the target nucleoside. This is the first step in the biosynthesis of wybutosine (yW), a modified base adjacent to the anticodon of tRNAs and required for accurate decoding. In Trichomonas vaginalis (strain ATCC PRA-98 / G3), this protein is tRNA (guanine(37)-N(1))-methyltransferase.